Here is a 331-residue protein sequence, read N- to C-terminus: MEKFLRYNIQIGKDQNKDADYGVFVFKPLERGFGHTLGNSLRRVLLSNIIGHSLFAIKIPNVSHEFQSIKGVKEDLTQIILNLKRLVVKIDQEIFGEEEQKETSLEKWPTLKIDFSKGGVLKASDIETPVGFEIINKDMYIATIESGVKFKMELFVKTGRGFTTFSENKELINAINVIAVDSNFSPVLKVGYKVSDIKTTKNEINDVLELEVATNGAVSAAEAVAMSAKILLEHYKPIVTELFDNYNDLRIINEEATVSSSKSSLAISIDELELSVRSYNCLKRAGIHTITQLTDKTKGEIEKIRNLGKKSFKEIIKKIQDRNLKLKEEQN.

Residues 1–242 are alpha N-terminal domain (alpha-NTD); the sequence is MEKFLRYNIQ…EHYKPIVTEL (242 aa). The interval 258 to 331 is alpha C-terminal domain (alpha-CTD); it reads VSSSKSSLAI…RNLKLKEEQN (74 aa).

This sequence belongs to the RNA polymerase alpha chain family. In terms of assembly, homodimer. The RNAP catalytic core consists of 2 alpha, 1 beta, 1 beta' and 1 omega subunit. When a sigma factor is associated with the core the holoenzyme is formed, which can initiate transcription.

The catalysed reaction is RNA(n) + a ribonucleoside 5'-triphosphate = RNA(n+1) + diphosphate. Functionally, DNA-dependent RNA polymerase catalyzes the transcription of DNA into RNA using the four ribonucleoside triphosphates as substrates. The protein is DNA-directed RNA polymerase subunit alpha of Malacoplasma penetrans (strain HF-2) (Mycoplasma penetrans).